The chain runs to 830 residues: Interleukin-4 receptor subunit alpha (830 aa).

A signal peptide spans Met1–Gly32. The Extracellular portion of the chain corresponds to Val33–Arg240. Cys41 and Cys51 are joined by a disulfide. 2 N-linked (GlcNAc...) asparagine glycosylation sites follow: Asn60 and Asn78. Cys82 and Cys94 are joined by a disulfide. Residues Asn120, Asn142, and Asn170 are each glycosylated (N-linked (GlcNAc...) asparagine). In terms of domain architecture, Fibronectin type-III spans Ala133–Tyr232. Ser172 is modified (phosphoserine). N-linked (GlcNAc...) asparagine glycans are attached at residues Asn184 and Asn217. The short motif at Trp220–Ser224 is the WSXWS motif element. The chain crosses the membrane as a helical span at residues Leu241–Ile264. The Cytoplasmic portion of the chain corresponds to Arg265–Ser830. The Box 1 motif signature appears at Trp270 to Ala278. Positions Glu378–Asp387 are enriched in acidic residues. 2 disordered regions span residues Glu378 to Gln403 and Met450 to Ser488. Residues Glu444–Ser564 are required for IRS1 activation and IL4-induced cell growth. Tyr504 is subject to Phosphotyrosine. Disordered regions lie at residues Ser508 to Tyr610 and Cys623 to Lys696. Acidic residues predominate over residues Gly518 to Glu534. The segment covering Pro538–Gln551 has biased composition (pro residues). The tract at residues Ser564–Leu662 is required for IL4-induced gene expression. Positions Ala570 to Gly582 are enriched in low complexity. A phosphotyrosine mark is found at Tyr583 and Tyr610. Residues Cys623–Glu635 are compositionally biased toward polar residues. At Tyr638 the chain carries Phosphotyrosine. Composition is skewed to pro residues over residues Pro646–Thr655 and Glu665–Pro676. An ITIM motif motif is present at residues Ile716–Leu721. The segment at Ser811–Ser830 is disordered.

Belongs to the type I cytokine receptor family. Type 4 subfamily. The functional IL4 receptor is formed by initial binding of IL4 to IL4R. Subsequent recruitment to the complex of the common gamma chain, in immune cells, creates a type I receptor and, in non-immune cells, of IL13RA1 forms a type II receptor. IL4R can also interact with the IL13/IL13RA1 complex to form a similar type II receptor. Interacts with PIK3C3. Interacts with the SH2-containing phosphatases, PTPN6/SHIP1, PTPN11/SHIP2 and INPP5D/SHIP. Interacts with JAK1 through a Box 1-containing region; inhibited by SOCS5. Interacts with SOCS5; inhibits IL4 signaling. Interacts with JAK3. Interacts with CLM1. Interacts with IL13RA2. In terms of processing, on IL4 binding, phosphorylated on C-terminal tyrosine residues.

The protein resides in the membrane. Receptor for both interleukin 4 and interleukin 13. Couples to the JAK1/2/3-STAT6 pathway. The IL4 response is involved in promoting Th2 differentiation. The IL4/IL13 responses are involved in regulating IgE production and, chemokine and mucus production at sites of allergic inflammation. In certain cell types, can signal through activation of insulin receptor substrates, IRS1/IRS2. The polypeptide is Interleukin-4 receptor subunit alpha (IL4R) (Sus scrofa (Pig)).